A 366-amino-acid polypeptide reads, in one-letter code: L-tyrosine C(3)-methyltransferase (366 aa).

The span at 1-12 (MTISLENTTVGQ) shows a compositional bias: polar residues. The disordered stretch occupies residues 1–22 (MTISLENTTVGQNPAGGPPTGK). S-adenosyl-L-methionine is bound at residue E223.

This sequence belongs to the class I-like SAM-binding methyltransferase superfamily. Cation-independent O-methyltransferase family.

The catalysed reaction is L-tyrosine + S-adenosyl-L-methionine = 3-methyl-L-tyrosine + S-adenosyl-L-homocysteine + H(+). Its pathway is antibiotic biosynthesis. In terms of biological role, C-methyltransferase that mediates the methylation of tyrosine into 3-methyl-L-tyrosine (3-Me-Tyr) in biosynthesis of saframycin A, a potent antitumor antibiotic that belongs to the tetrahydroisoquinoline family. Involved in biosynthesis of 3-hydroxy-5-methyl-O-methyltyrosine (3-OH-5-Me-OMe-Tyr), a core structure of saframycin A. This chain is L-tyrosine C(3)-methyltransferase, found in Streptomyces lavendulae.